A 310-amino-acid chain; its full sequence is 4-diphosphocytidyl-2-C-methyl-D-erythritol kinase (310 aa).

Residue K20 is part of the active site. 106-116 (PMGGGLGGGSS) serves as a coordination point for ATP. D148 is a catalytic residue.

The protein belongs to the GHMP kinase family. IspE subfamily. As to quaternary structure, homodimer.

It carries out the reaction 4-CDP-2-C-methyl-D-erythritol + ATP = 4-CDP-2-C-methyl-D-erythritol 2-phosphate + ADP + H(+). It participates in isoprenoid biosynthesis; isopentenyl diphosphate biosynthesis via DXP pathway; isopentenyl diphosphate from 1-deoxy-D-xylulose 5-phosphate: step 3/6. Its function is as follows. Catalyzes the phosphorylation of the position 2 hydroxy group of 4-diphosphocytidyl-2C-methyl-D-erythritol. This is 4-diphosphocytidyl-2-C-methyl-D-erythritol kinase from Yersinia pseudotuberculosis serotype O:3 (strain YPIII).